Here is a 363-residue protein sequence, read N- to C-terminus: Chorismate synthase (363 aa).

Arg-48 provides a ligand contact to NADP(+). FMN-binding positions include 125 to 127, 238 to 239, Gly-278, 293 to 297, and Arg-319; these read RSS, NA, and KPTAS.

The protein belongs to the chorismate synthase family. As to quaternary structure, homotetramer. FMNH2 serves as cofactor.

It catalyses the reaction 5-O-(1-carboxyvinyl)-3-phosphoshikimate = chorismate + phosphate. It functions in the pathway metabolic intermediate biosynthesis; chorismate biosynthesis; chorismate from D-erythrose 4-phosphate and phosphoenolpyruvate: step 7/7. Its function is as follows. Catalyzes the anti-1,4-elimination of the C-3 phosphate and the C-6 proR hydrogen from 5-enolpyruvylshikimate-3-phosphate (EPSP) to yield chorismate, which is the branch point compound that serves as the starting substrate for the three terminal pathways of aromatic amino acid biosynthesis. This reaction introduces a second double bond into the aromatic ring system. This chain is Chorismate synthase, found in Acinetobacter baumannii (strain AB0057).